A 65-amino-acid chain; its full sequence is MKFKDINVKPVAELEQMVNDLKAELFTLRFQNSTGQLDQTHKIKMVRQDIAKVLTALSQKNRGAQ.

It belongs to the universal ribosomal protein uL29 family.

This chain is Large ribosomal subunit protein uL29, found in Mycoplasmopsis pulmonis (strain UAB CTIP) (Mycoplasma pulmonis).